A 336-amino-acid chain; its full sequence is Effector SCP41 (336 aa).

An N-terminal signal peptide occupies residues 1–19 (MRTETASLLLLAALSVAEE). Disordered regions lie at residues 59 to 99 (LFSP…STNN) and 189 to 230 (PVGN…GQKG). Residues 63–74 (QQQQQQQQQQQQ) show a composition bias toward low complexity.

In terms of assembly, interacts with A.thaliana CBP60G; the interaction is direct. Interacts with A.thaliana SARD1. Interacts with G.hirsutum CBP60B.

It is found in the secreted. The protein resides in the host nucleus. Effector that binds transcription regulators in the host plant to suppress the host's innate immune response. Inhibits the host plant transcription regulators CBP60G and SARD1. The polypeptide is Effector SCP41 (Verticillium dahliae (strain VdLs.17 / ATCC MYA-4575 / FGSC 10137) (Verticillium wilt)).